Reading from the N-terminus, the 348-residue chain is Eukaryotic translation initiation factor 3 subunit H (348 aa).

Residues 1–25 are disordered; that stretch reads MASRKEGSGAAGGGFGASKGKGKAA. A compositionally biased stretch (gly residues) spans 9–19; it reads GAAGGGFGASK. The MPN domain occupies 35 to 169; it reads VQIDGLVVLK…LKAYRLTPKL (135 aa). Residues 266 to 285 show a composition bias toward low complexity; that stretch reads QQQQKHQYQQRRQQENLQRQ. The segment at 266 to 304 is disordered; that stretch reads QQQQKHQYQQRRQQENLQRQSRGEAPLPEEDINKLFKPP.

It belongs to the eIF-3 subunit H family. As to quaternary structure, component of the eukaryotic translation initiation factor 3 (eIF-3) complex, which is composed of 13 subunits: EIF3A, EIF3B, EIF3C, EIF3D, EIF3E, EIF3F, EIF3G, EIF3H, EIF3I, EIF3J, EIF3K, EIF3L and EIF3M.

The protein resides in the cytoplasm. Component of the eukaryotic translation initiation factor 3 (eIF-3) complex, which is involved in protein synthesis of a specialized repertoire of mRNAs and, together with other initiation factors, stimulates binding of mRNA and methionyl-tRNAi to the 40S ribosome. The eIF-3 complex specifically targets and initiates translation of a subset of mRNAs involved in cell proliferation. The sequence is that of Eukaryotic translation initiation factor 3 subunit H from Gallus gallus (Chicken).